Here is a 315-residue protein sequence, read N- to C-terminus: D-alanine--D-alanine ligase (315 aa).

Residues 101-297 (KHIFRSLNID…FNELVKIIIE (197 aa)) form the ATP-grasp domain. ATP is bound at residue 128 to 181 (KIDYPYVLKPINEGSSIGVYIIFSHEDYLELKNNSSTIMEKMIVEEYIPGIELH). Mg(2+) is bound by residues Asp-249, Glu-263, and Asn-265.

This sequence belongs to the D-alanine--D-alanine ligase family. Mg(2+) serves as cofactor. The cofactor is Mn(2+).

It localises to the cytoplasm. The enzyme catalyses 2 D-alanine + ATP = D-alanyl-D-alanine + ADP + phosphate + H(+). The protein operates within cell wall biogenesis; peptidoglycan biosynthesis. In terms of biological role, cell wall formation. This chain is D-alanine--D-alanine ligase, found in Wolbachia pipientis wMel.